The following is a 435-amino-acid chain: 5-methylthioadenosine/S-adenosylhomocysteine deaminase (435 aa).

2 residues coordinate Zn(2+): H65 and H67. 3 residues coordinate substrate: E94, R150, and H189. H216 contributes to the Zn(2+) binding site. 2 residues coordinate substrate: E219 and D304. A Zn(2+)-binding site is contributed by D304.

It belongs to the metallo-dependent hydrolases superfamily. MTA/SAH deaminase family. Zn(2+) is required as a cofactor.

The catalysed reaction is S-adenosyl-L-homocysteine + H2O + H(+) = S-inosyl-L-homocysteine + NH4(+). It catalyses the reaction S-methyl-5'-thioadenosine + H2O + H(+) = S-methyl-5'-thioinosine + NH4(+). Catalyzes the deamination of 5-methylthioadenosine and S-adenosyl-L-homocysteine into 5-methylthioinosine and S-inosyl-L-homocysteine, respectively. Is also able to deaminate adenosine. The polypeptide is 5-methylthioadenosine/S-adenosylhomocysteine deaminase (Bacillus thuringiensis (strain Al Hakam)).